Consider the following 277-residue polypeptide: Small ribosomal subunit protein uS2 (277 aa).

Residues 1–78 (MSENDEGTDA…PADEEPVLDE (78 aa)) are disordered.

Belongs to the universal ribosomal protein uS2 family.

The chain is Small ribosomal subunit protein uS2 from Natronomonas pharaonis (strain ATCC 35678 / DSM 2160 / CIP 103997 / JCM 8858 / NBRC 14720 / NCIMB 2260 / Gabara) (Halobacterium pharaonis).